We begin with the raw amino-acid sequence, 290 residues long: 4-hydroxy-tetrahydrodipicolinate synthase (290 aa).

T44 provides a ligand contact to pyruvate. Catalysis depends on Y131, which acts as the Proton donor/acceptor. Residue K159 is the Schiff-base intermediate with substrate of the active site. I201 is a binding site for pyruvate.

It belongs to the DapA family. In terms of assembly, homotetramer; dimer of dimers.

The protein localises to the cytoplasm. It carries out the reaction L-aspartate 4-semialdehyde + pyruvate = (2S,4S)-4-hydroxy-2,3,4,5-tetrahydrodipicolinate + H2O + H(+). It functions in the pathway amino-acid biosynthesis; L-lysine biosynthesis via DAP pathway; (S)-tetrahydrodipicolinate from L-aspartate: step 3/4. Its function is as follows. Catalyzes the condensation of (S)-aspartate-beta-semialdehyde [(S)-ASA] and pyruvate to 4-hydroxy-tetrahydrodipicolinate (HTPA). The polypeptide is 4-hydroxy-tetrahydrodipicolinate synthase (Jannaschia sp. (strain CCS1)).